Here is a 149-residue protein sequence, read N- to C-terminus: Cytochrome c-type biogenesis protein CcmE (149 aa).

The Cytoplasmic segment spans residues 1–7 (MKKRHQR). A helical; Signal-anchor for type II membrane protein transmembrane segment spans residues 8–28 (LFLVLGVVAGVSVATALVLNA). Residues 29–149 (FRDNMTFFIT…EHSVDEVGDY (121 aa)) are Periplasmic-facing. Positions 123 and 127 each coordinate heme.

It belongs to the CcmE/CycJ family.

It localises to the cell inner membrane. Heme chaperone required for the biogenesis of c-type cytochromes. Transiently binds heme delivered by CcmC and transfers the heme to apo-cytochromes in a process facilitated by CcmF and CcmH. The chain is Cytochrome c-type biogenesis protein CcmE from Halorhodospira halophila (strain DSM 244 / SL1) (Ectothiorhodospira halophila (strain DSM 244 / SL1)).